A 135-amino-acid chain; its full sequence is Holo-[acyl-carrier-protein] synthase (135 aa).

Mg(2+) is bound by residues Asp9 and Glu63.

Belongs to the P-Pant transferase superfamily. AcpS family. Requires Mg(2+) as cofactor.

It is found in the cytoplasm. It catalyses the reaction apo-[ACP] + CoA = holo-[ACP] + adenosine 3',5'-bisphosphate + H(+). In terms of biological role, transfers the 4'-phosphopantetheine moiety from coenzyme A to a Ser of acyl-carrier-protein. The sequence is that of Holo-[acyl-carrier-protein] synthase from Paraburkholderia phymatum (strain DSM 17167 / CIP 108236 / LMG 21445 / STM815) (Burkholderia phymatum).